A 350-amino-acid polypeptide reads, in one-letter code: Adenine deaminase (350 aa).

Residues His-24, His-26, and His-207 each coordinate Zn(2+). Glu-210 acts as the Proton donor in catalysis. Zn(2+) is bound at residue Asp-288. Substrate is bound at residue Asp-289.

It belongs to the metallo-dependent hydrolases superfamily. Adenosine and AMP deaminases family. Adenine deaminase type 2 subfamily. The cofactor is Zn(2+).

The catalysed reaction is adenine + H2O + H(+) = hypoxanthine + NH4(+). Catalyzes the hydrolytic deamination of adenine to hypoxanthine. Plays an important role in the purine salvage pathway and in nitrogen catabolism. This is Adenine deaminase from Paraburkholderia xenovorans (strain LB400).